The chain runs to 308 residues: Ribonuclease Z (308 aa).

Residues H61, H63, D65, H66, H142, D211, and H270 each coordinate Zn(2+). D65 (proton acceptor) is an active-site residue.

Belongs to the RNase Z family. Homodimer. It depends on Zn(2+) as a cofactor.

It carries out the reaction Endonucleolytic cleavage of RNA, removing extra 3' nucleotides from tRNA precursor, generating 3' termini of tRNAs. A 3'-hydroxy group is left at the tRNA terminus and a 5'-phosphoryl group is left at the trailer molecule.. Zinc phosphodiesterase, which displays some tRNA 3'-processing endonuclease activity. Probably involved in tRNA maturation, by removing a 3'-trailer from precursor tRNA. This is Ribonuclease Z from Clostridium beijerinckii (strain ATCC 51743 / NCIMB 8052) (Clostridium acetobutylicum).